A 159-amino-acid chain; its full sequence is MIEGILKEGFITTSYDSVMNWAKTGSLWPMSFGLACCAVEMMHAANARYDISRFGAEVFRASPRQSDLIIVAGTLCNKMAPAFRKVYDQMSEPRRVISMGSCANGGGYYHYSYSVVRGCDRIVPVDVYVPGCPPTAEALLYGIIQLQHKIRRTQTIARA.

4 residues coordinate [4Fe-4S] cluster: Cys36, Cys37, Cys102, and Cys132.

The protein belongs to the complex I 20 kDa subunit family. In terms of assembly, NDH-1 is composed of 14 different subunits. Subunits NuoB, C, D, E, F, and G constitute the peripheral sector of the complex. It depends on [4Fe-4S] cluster as a cofactor.

Its subcellular location is the cell inner membrane. It carries out the reaction a quinone + NADH + 5 H(+)(in) = a quinol + NAD(+) + 4 H(+)(out). Functionally, NDH-1 shuttles electrons from NADH, via FMN and iron-sulfur (Fe-S) centers, to quinones in the respiratory chain. Couples the redox reaction to proton translocation (for every two electrons transferred, four hydrogen ions are translocated across the cytoplasmic membrane), and thus conserves the redox energy in a proton gradient. This is NADH-quinone oxidoreductase subunit B from Albidiferax ferrireducens (strain ATCC BAA-621 / DSM 15236 / T118) (Rhodoferax ferrireducens).